Here is a 222-residue protein sequence, read N- to C-terminus: PKHD-type hydroxylase Syncc9605_1577 (222 aa).

Residues 80 to 175 form the Fe2OG dioxygenase domain; the sequence is KVHSLLVSRS…RYVCVGWIES (96 aa). Fe cation-binding residues include His-98, Asp-100, and His-156. Arg-166 is a binding site for 2-oxoglutarate.

The cofactor is Fe(2+). Requires L-ascorbate as cofactor.

This Synechococcus sp. (strain CC9605) protein is PKHD-type hydroxylase Syncc9605_1577.